A 214-amino-acid chain; its full sequence is Protein DMP6 (214 aa).

Transmembrane regions (helical) follow at residues 52-72 (LANL…PICT), 83-103 (FMTA…SFTD), 143-163 (FIDF…VLFD), and 178-198 (VVEL…MVFA).

It belongs to the plant DMP1 protein family. In terms of tissue distribution, expressed constitutively in leaves, stems, flowers, siliques and roots (e.g. root hairs).

The protein localises to the vacuole membrane. Functionally, involved in membrane remodeling. The sequence is that of Protein DMP6 from Arabidopsis thaliana (Mouse-ear cress).